We begin with the raw amino-acid sequence, 506 residues long: UBX domain-containing protein 4 (506 aa).

The tract at residues 1 to 199 (MLWFQGAIPA…PAEDLTVRVE (199 aa)) is interaction with UBQLN1. Topologically, residues 1-411 (MLWFQGAIPA…VHSSSGDIWT (411 aa)) are cytoplasmic. Positions 110-194 (QQMHSSKGEA…CSNQRPAEDL (85 aa)) are disordered. Polar residues-rich tracts occupy residues 120 to 136 (SVTN…TPSA) and 153 to 167 (LCET…SDTA). The UBX domain maps to 313–391 (DRSTIARIQF…ELAPSASVVL (79 aa)). An intramembrane segment occupies 412–432 (LLGTVLYPFLAIWRLISNFLF). The Cytoplasmic segment spans residues 433–506 (SNPPPAQTSA…TWNGNSTQQM (74 aa)). Residues 437–506 (PAQTSARATS…TWNGNSTQQM (70 aa)) form a disordered region. Over residues 444–456 (ATSTEPSNSASSS) the composition is skewed to low complexity. Residues 457-489 (KSEKREPVRKRMLEKRGEDFKKEGKIYRLRTQD) are compositionally biased toward basic and acidic residues. Threonine 487 is subject to Phosphothreonine. Residues 496–506 (NTWNGNSTQQM) are compositionally biased toward polar residues.

Directly interacts with VCP. Interacts with UBQLN1. Forms a complex with VCP and UBQLN1. In terms of tissue distribution, expressed in many tissues, including brain, heart, kidney, liver, muscle and spleen (at protein level).

It is found in the endoplasmic reticulum membrane. It localises to the nucleus envelope. Its function is as follows. Involved in endoplasmic reticulum-associated protein degradation (ERAD). Acts as a platform to recruit both UBQLN1 and VCP to the ER during ERAD. The polypeptide is UBX domain-containing protein 4 (Ubxn4) (Mus musculus (Mouse)).